A 791-amino-acid polypeptide reads, in one-letter code: Protein Rf1, mitochondrial (791 aa).

The transit peptide at 1–27 (MARRAASRAVGALRSDGSIQGRGGRAG) directs the protein to the mitochondrion. Residues 1 to 31 (MARRAASRAVGALRSDGSIQGRGGRAGGSGA) are disordered. Positions 20-30 (QGRGGRAGGSG) are enriched in gly residues. PPR repeat units follow at residues 86–120 (DLCT…GFRV), 121–156 (DAIA…GCIP), 157–194 (NVFS…GSPP), 195–229 (DVVS…GILP), 230–264 (DVVT…GVMP), 265–299 (DCMT…GVEP), 300–334 (DVVT…GLKP), 335–369 (EITT…GIHP), 370–404 (DHYV…GLNP), 405–439 (NAVT…GLSP), 440–474 (GNIV…GICL), 475–509 (NTIF…GVKP), 510–544 (NVIT…GLKP), 545–579 (NTVT…GVSP), 580–614 (DIIT…GTQI), 615–649 (ELST…DLKL), 650–684 (EART…GLVP), 685–719 (NYWT…GCTV), and 720–754 (DSGM…HFSL).

The protein resides in the mitochondrion. Functionally, reduces the expression of the cytoplasmic male sterility (CMS)-associated mitochondrial gene ORF79, encoding a cytotoxic peptide. Can restore male fertility by blocking ORF79 production via endonucleolytic cleavage of dicistronic ATP6/ORF79 mRNA. Promotes the editing of ATP6 mRNAs independently of its cleavage function. This Oryza sativa subsp. indica (Rice) protein is Protein Rf1, mitochondrial (Rf1).